The chain runs to 154 residues: 6,7-dimethyl-8-ribityllumazine synthase (154 aa).

5-amino-6-(D-ribitylamino)uracil contacts are provided by residues F26, 60 to 62 (ALE), and 84 to 86 (CII). Residue 89–90 (ET) participates in (2S)-2-hydroxy-3-oxobutyl phosphate binding. The active-site Proton donor is H92. N117 is a binding site for 5-amino-6-(D-ribitylamino)uracil. R131 is a binding site for (2S)-2-hydroxy-3-oxobutyl phosphate.

Belongs to the DMRL synthase family.

It catalyses the reaction (2S)-2-hydroxy-3-oxobutyl phosphate + 5-amino-6-(D-ribitylamino)uracil = 6,7-dimethyl-8-(1-D-ribityl)lumazine + phosphate + 2 H2O + H(+). It participates in cofactor biosynthesis; riboflavin biosynthesis; riboflavin from 2-hydroxy-3-oxobutyl phosphate and 5-amino-6-(D-ribitylamino)uracil: step 1/2. Catalyzes the formation of 6,7-dimethyl-8-ribityllumazine by condensation of 5-amino-6-(D-ribitylamino)uracil with 3,4-dihydroxy-2-butanone 4-phosphate. This is the penultimate step in the biosynthesis of riboflavin. The sequence is that of 6,7-dimethyl-8-ribityllumazine synthase from Acidovorax ebreus (strain TPSY) (Diaphorobacter sp. (strain TPSY)).